The following is a 318-amino-acid chain: 4-hydroxy-3-methylbut-2-enyl diphosphate reductase (318 aa).

Residue C12 coordinates [4Fe-4S] cluster. (2E)-4-hydroxy-3-methylbut-2-enyl diphosphate-binding residues include H41 and H74. Dimethylallyl diphosphate contacts are provided by H41 and H74. Isopentenyl diphosphate contacts are provided by H41 and H74. C96 contacts [4Fe-4S] cluster. Position 124 (H124) interacts with (2E)-4-hydroxy-3-methylbut-2-enyl diphosphate. Dimethylallyl diphosphate is bound at residue H124. H124 serves as a coordination point for isopentenyl diphosphate. E126 acts as the Proton donor in catalysis. Residue T168 participates in (2E)-4-hydroxy-3-methylbut-2-enyl diphosphate binding. C198 lines the [4Fe-4S] cluster pocket. 4 residues coordinate (2E)-4-hydroxy-3-methylbut-2-enyl diphosphate: S226, S227, N228, and S270. 4 residues coordinate dimethylallyl diphosphate: S226, S227, N228, and S270. S226, S227, N228, and S270 together coordinate isopentenyl diphosphate.

The protein belongs to the IspH family. The cofactor is [4Fe-4S] cluster.

It carries out the reaction isopentenyl diphosphate + 2 oxidized [2Fe-2S]-[ferredoxin] + H2O = (2E)-4-hydroxy-3-methylbut-2-enyl diphosphate + 2 reduced [2Fe-2S]-[ferredoxin] + 2 H(+). The catalysed reaction is dimethylallyl diphosphate + 2 oxidized [2Fe-2S]-[ferredoxin] + H2O = (2E)-4-hydroxy-3-methylbut-2-enyl diphosphate + 2 reduced [2Fe-2S]-[ferredoxin] + 2 H(+). Its pathway is isoprenoid biosynthesis; dimethylallyl diphosphate biosynthesis; dimethylallyl diphosphate from (2E)-4-hydroxy-3-methylbutenyl diphosphate: step 1/1. The protein operates within isoprenoid biosynthesis; isopentenyl diphosphate biosynthesis via DXP pathway; isopentenyl diphosphate from 1-deoxy-D-xylulose 5-phosphate: step 6/6. Catalyzes the conversion of 1-hydroxy-2-methyl-2-(E)-butenyl 4-diphosphate (HMBPP) into a mixture of isopentenyl diphosphate (IPP) and dimethylallyl diphosphate (DMAPP). Acts in the terminal step of the DOXP/MEP pathway for isoprenoid precursor biosynthesis. The sequence is that of 4-hydroxy-3-methylbut-2-enyl diphosphate reductase from Psychrobacter arcticus (strain DSM 17307 / VKM B-2377 / 273-4).